The primary structure comprises 29 residues: Galanin (29 aa).

Ala29 bears the Alanine amide mark.

The protein belongs to the galanin family.

It is found in the secreted. Contracts smooth muscle of the gastrointestinal and genitourinary tract, regulates growth hormone release, modulates insulin release, and may be involved in the control of adrenal secretion. The sequence is that of Galanin (gal) from Amia calva (Bowfin).